Here is a 722-residue protein sequence, read N- to C-terminus: Inactive serine protease PAMR1 (722 aa).

The first 21 residues, Met1 to Ala21, serve as a signal peptide directing secretion. Residue Asn98 is glycosylated (N-linked (GlcNAc...) asparagine). 8 disulfides stabilise this stretch: Cys130-Cys152, Cys179-Cys201, Cys241-Cys252, Cys246-Cys262, Cys264-Cys273, Cys282-Cys331, Cys317-Cys344, and Cys416-Cys444. In terms of domain architecture, CUB spans Cys130–Val238. The EGF-like domain maps to Glu237 to Glu274. 2 consecutive Sushi domains span residues Lys280–Lys346 and Lys393–Pro446. N-linked (GlcNAc...) asparagine glycosylation occurs at Asn318. The Peptidase S1 domain maps to Ile447–Lys722. Asn455 carries an N-linked (GlcNAc...) asparagine glycan. The cysteines at positions 491 and 507 are disulfide-linked. Residue Asn616 is glycosylated (N-linked (GlcNAc...) asparagine). 2 disulfide bridges follow: Cys632–Cys651 and Cys663–Cys699.

Belongs to the peptidase S1 family.

It localises to the secreted. May play a role in regeneration of skeletal muscle. This is Inactive serine protease PAMR1 (pamr1) from Xenopus tropicalis (Western clawed frog).